The primary structure comprises 493 residues: Transcript termination protein A18 (493 aa).

The Helicase ATP-binding domain maps to 100–256 (MIESKRPLYI…NSIINIAKLS (157 aa)). ATP is bound at residue 113-120 (LACGFGKT). The DESH box motif lies at 206–209 (DESH).

This sequence belongs to the helicase family. Poxviruses subfamily. Interacts with G2. Might be part of a transcription complex composed at least of G2, A18, and H5.

The protein localises to the virion. DNA helicase which seems to act as a postreplicative transcription termination factor. Involved in ATP-dependent release of nascent RNA. Forms a stable complex with single-stranded DNA, and to a lesser extent RNA. The chain is Transcript termination protein A18 from Vaccinia virus (strain Tian Tan) (VACV).